We begin with the raw amino-acid sequence, 349 residues long: 26S proteasome non-ATPase regulatory subunit 4 (349 aa).

The 184-residue stretch at 5-188 folds into the VWFA domain; the sequence is ATIVCLDNSE…LSDIILQSPI (184 aa). Positions 204-223 constitute a UIM 1 domain; sequence DTDPDLAMALKLSLEEEKQR. Over residues 219-234 the composition is skewed to basic and acidic residues; the sequence is EEKQRQERERKAREEA. 2 disordered regions span residues 219–257 and 274–349; these read EEKQ…MDVN and TDKM…NEKK. The segment covering 235 to 253 has biased composition (low complexity); sequence NGGSTNSGTTTTTAPTESN. Positions 259–278 constitute a UIM 2 domain; it reads EDDPELAEALALSMATDKME. A compositionally biased stretch (low complexity) spans 280 to 301; the sequence is QSSTTNTDSQPPQQQQQPPTDD. Residues 335–349 are compositionally biased toward basic and acidic residues; sequence LSKKDEDKDKDNEKK.

Belongs to the proteasome subunit S5A family. As to quaternary structure, the 26S proteasome is composed of a core protease, known as the 20S proteasome, capped at one or both ends by the 19S regulatory complex (RC). The RC is composed of at least 18 different subunits in two subcomplexes, the base and the lid, which form the portions proximal and distal to the 20S proteolytic core, respectively.

Its function is as follows. Binds and presumably selects ubiquitin-conjugates for destruction. This is 26S proteasome non-ATPase regulatory subunit 4 (psmD4) from Dictyostelium discoideum (Social amoeba).